Reading from the N-terminus, the 113-residue chain is Cell cycle protein GpsB (113 aa).

The stretch at 36 to 68 forms a coiled coil; that stretch reads LDMVIKDYSTFTQEIEALQAENIRLVQELDNAP.

Belongs to the GpsB family. In terms of assembly, forms polymers through the coiled coil domains. Interacts with PBP1, MreC and EzrA.

The protein localises to the cytoplasm. Functionally, divisome component that associates with the complex late in its assembly, after the Z-ring is formed, and is dependent on DivIC and PBP2B for its recruitment to the divisome. Together with EzrA, is a key component of the system that regulates PBP1 localization during cell cycle progression. Its main role could be the removal of PBP1 from the cell pole after pole maturation is completed. Also contributes to the recruitment of PBP1 to the division complex. Not essential for septum formation. This Listeria innocua serovar 6a (strain ATCC BAA-680 / CLIP 11262) protein is Cell cycle protein GpsB.